Reading from the N-terminus, the 391-residue chain is Heme A synthase (391 aa).

8 consecutive transmembrane segments (helical) span residues 37–57 (IRLW…VGGL), 121–141 (RQLG…FLAA), 152–172 (LLAL…MVAS), 186–206 (LATH…QALL), 229–249 (TTVL…VAGI), 298–318 (FLHR…WIFG), 332–352 (LLAM…LSAA), and 354–374 (WQVA…ILHA). A heme-binding site is contributed by His-300. His-360 contacts heme.

It belongs to the COX15/CtaA family. Type 2 subfamily. As to quaternary structure, interacts with CtaB. Heme b is required as a cofactor.

It is found in the cell membrane. It catalyses the reaction Fe(II)-heme o + 2 A + H2O = Fe(II)-heme a + 2 AH2. It functions in the pathway porphyrin-containing compound metabolism; heme A biosynthesis; heme A from heme O: step 1/1. Functionally, catalyzes the conversion of heme O to heme A by two successive hydroxylations of the methyl group at C8. The first hydroxylation forms heme I, the second hydroxylation results in an unstable dihydroxymethyl group, which spontaneously dehydrates, resulting in the formyl group of heme A. The protein is Heme A synthase of Cereibacter sphaeroides (strain ATCC 17029 / ATH 2.4.9) (Rhodobacter sphaeroides).